The chain runs to 133 residues: Peptide methionine sulfoxide reductase MsrB (133 aa).

Over residues 1 to 12 (MSEKVQKSEHEW) the composition is skewed to basic and acidic residues. The segment at 1–36 (MSEKVQKSEHEWQQQLTPEQYRVTREKGTERPFTGD) is disordered. A MsrB domain is found at 9–132 (EHEWQQQLTP…NSVSLDFHPG (124 aa)). Residues C48, C51, C97, and C100 each contribute to the Zn(2+) site. Catalysis depends on C121, which acts as the Nucleophile.

This sequence belongs to the MsrB Met sulfoxide reductase family. Zn(2+) serves as cofactor.

The enzyme catalyses L-methionyl-[protein] + [thioredoxin]-disulfide + H2O = L-methionyl-(R)-S-oxide-[protein] + [thioredoxin]-dithiol. This is Peptide methionine sulfoxide reductase MsrB from Chromohalobacter salexigens (strain ATCC BAA-138 / DSM 3043 / CIP 106854 / NCIMB 13768 / 1H11).